The primary structure comprises 93 residues: UPF0223 protein gbs1030 (93 aa).

Belongs to the UPF0223 family.

In Streptococcus agalactiae serotype III (strain NEM316), this protein is UPF0223 protein gbs1030.